The following is a 606-amino-acid chain: Ectonucleoside triphosphate diphosphohydrolase 7 (606 aa).

The Cytoplasmic portion of the chain corresponds to 1 to 28; that stretch reads MARISFSYLCPASWYFTVPTVSPFLRQR. A helical transmembrane segment spans residues 29 to 49; the sequence is VAFLGLFFIPCVLLLLLIMDL. Over 50–548 the chain is Vesicular; that stretch reads RHWATSLPRD…PAHGSWLRLS (499 aa). The Proton acceptor role is filled by E217. A glycan (N-linked (GlcNAc...) asparagine) is linked at N330. Cysteines 448 and 477 form a disulfide. Residues 549-569 form a helical membrane-spanning segment; that stretch reads FVYNHYLFFACTLVVLLAIVL. Residues 570 to 606 lie on the Cytoplasmic side of the membrane; sequence YLLRIHRIHRRQTRASAPLDLLWIEQVVPMIGVQVGP.

It belongs to the GDA1/CD39 NTPase family. The cofactor is Ca(2+). It depends on Mg(2+) as a cofactor. In terms of tissue distribution, widely expressed. Expressed at high level in brain, kidney, liver, testis and small intestin. Weakly expressed in lung, thymus and heart.

The protein localises to the cytoplasmic vesicle membrane. The enzyme catalyses a ribonucleoside 5'-triphosphate + H2O = a ribonucleoside 5'-diphosphate + phosphate + H(+). It catalyses the reaction UTP + H2O = UDP + phosphate + H(+). The catalysed reaction is GTP + H2O = GDP + phosphate + H(+). It carries out the reaction CTP + H2O = CDP + phosphate + H(+). The enzyme catalyses ATP + H2O = ADP + phosphate + H(+). Catalyzes the hydrolysis of nucleoside triphosphates and diphosphates in a calcium- or magnesium-dependent manner. Preferentially hydrolyzes nucleoside 5'-triphosphates, with substrate preference for UTP &gt; GTP &gt; CTP. Hydrolyzes nucleoside diphosphates only to a minor extent. In contrast to its human ortholog is able to hydrolyze ATP. In the epithelial cells of small intestine controls luminal ATP levels, therefore regulating Th17-cell development. This is Ectonucleoside triphosphate diphosphohydrolase 7 (Entpd7) from Mus musculus (Mouse).